Here is a 368-residue protein sequence, read N- to C-terminus: Probable endopolygalacturonase I (368 aa).

The first 18 residues, 1 to 18, serve as a signal peptide directing secretion; the sequence is MHSFQLLGLAALGSLVAA. Positions 19–31 are excised as a propeptide; the sequence is APSPSRVSDLTER. Residues Cys35 and Cys50 are joined by a disulfide bond. 6 PbH1 repeats span residues 162 to 192, 193 to 214, 215 to 235, 244 to 265, 273 to 295, and 307 to 328; these read ANNLHLTDITIDNSDGDSKGGHNTDGFDISE, SNGVYISGANVKNQDDCIAINS, GKNIEFTGGTCSGGHGLSIGS, VQGVKITDSTVTNSDNGIRIKT, VSDVTYSNIKLSGIHKKGIVIQQ, and SNGIPIKDVTVDGITGSVDSKA. Catalysis depends on Asp207, which acts as the Proton donor. Cys209 and Cys225 are joined by a disulfide. His229 is an active-site residue. Disulfide bonds link Cys335–Cys340 and Cys359–Cys368.

It belongs to the glycosyl hydrolase 28 family.

It localises to the secreted. It carries out the reaction (1,4-alpha-D-galacturonosyl)n+m + H2O = (1,4-alpha-D-galacturonosyl)n + (1,4-alpha-D-galacturonosyl)m.. Involved in maceration and soft-rotting of plant tissue. Hydrolyzes the 1,4-alpha glycosidic bonds of de-esterified pectate in the smooth region of the plant cell wall. The protein is Probable endopolygalacturonase I (pgaI) of Aspergillus terreus (strain NIH 2624 / FGSC A1156).